The following is a 294-amino-acid chain: Elongation factor Ts (294 aa).

The involved in Mg(2+) ion dislocation from EF-Tu stretch occupies residues threonine 79–valine 82.

It belongs to the EF-Ts family.

The protein localises to the cytoplasm. Associates with the EF-Tu.GDP complex and induces the exchange of GDP to GTP. It remains bound to the aminoacyl-tRNA.EF-Tu.GTP complex up to the GTP hydrolysis stage on the ribosome. This chain is Elongation factor Ts (tsf), found in Geobacillus kaustophilus (strain HTA426).